The following is a 407-amino-acid chain: Leucine-rich repeat-containing protein 42 (407 aa).

LRR repeat units lie at residues 138–159 (VLKS…EEIR), 163–184 (SLEC…FKYI), 191–211 (SLVK…QRLT), 223–243 (NLQL…RYLT), and 247–268 (TLQK…KGFF). A disordered region spans residues 360–389 (VQSSPSGETHSTHKSRKRRLSTEEEQSAAP).

It belongs to the LRRC42 family.

This is Leucine-rich repeat-containing protein 42 (lrrc42) from Danio rerio (Zebrafish).